The primary structure comprises 73 residues: Large ribosomal subunit protein bL28 (73 aa).

Belongs to the bacterial ribosomal protein bL28 family.

This Fervidobacterium nodosum (strain ATCC 35602 / DSM 5306 / Rt17-B1) protein is Large ribosomal subunit protein bL28.